We begin with the raw amino-acid sequence, 514 residues long: 3-octaprenyl-4-hydroxybenzoate carboxy-lyase (514 aa).

Residue N177 participates in Mn(2+) binding. Residues 180–182 (IYR), 194–196 (RWL), and 199–200 (RG) each bind prenylated FMN. E243 lines the Mn(2+) pocket. Catalysis depends on D314, which acts as the Proton donor.

The protein belongs to the UbiD family. Homohexamer. Prenylated FMN serves as cofactor. The cofactor is Mn(2+).

It localises to the cell membrane. It carries out the reaction a 4-hydroxy-3-(all-trans-polyprenyl)benzoate + H(+) = a 2-(all-trans-polyprenyl)phenol + CO2. The protein operates within cofactor biosynthesis; ubiquinone biosynthesis. In terms of biological role, catalyzes the decarboxylation of 3-octaprenyl-4-hydroxy benzoate to 2-octaprenylphenol, an intermediate step in ubiquinone biosynthesis. This Bordetella petrii (strain ATCC BAA-461 / DSM 12804 / CCUG 43448) protein is 3-octaprenyl-4-hydroxybenzoate carboxy-lyase.